Here is a 143-residue protein sequence, read N- to C-terminus: Antiholin-like protein LrgA (143 aa).

The next 4 membrane-spanning stretches (helical) occupy residues 6-26, 30-50, 61-81, and 97-117; these read VYSF…SNII, LPIP…LLCL, LGTA…ISVI, and VIVV…QFIL.

The protein belongs to the CidA/LrgA family. LrgA subfamily.

It localises to the cell membrane. Functionally, inhibits the expression or activity of extracellular murein hydrolases by interacting, possibly with LrgB, with the holin-like protein CidA. The LrgAB and CidA proteins may affect the proton motive force of the membrane. May be involved in programmed cell death (PCD), possibly triggering PCD in response to antibiotics and environmental stresses. This chain is Antiholin-like protein LrgA, found in Bacillus anthracis (strain A0248).